The chain runs to 365 residues: Centrosomal protein of 41 kDa B (365 aa).

Residues 1–14 (MSAKRSIGDPEILK) show a composition bias toward basic and acidic residues. Disordered regions lie at residues 1-23 (MSAK…NQKY) and 104-123 (EFLT…SKSP). The Rhodanese domain occupies 177–274 (EDCPFLLLDV…ISQKFPQGLT (98 aa)). The segment at 329-365 (TSTPSRLRLDSRNSKVPSSASSARSLSSTSSHSKPWK) is disordered. A compositionally biased stretch (low complexity) spans 342–365 (SKVPSSASSARSLSSTSSHSKPWK).

It belongs to the CEP41 family.

Its subcellular location is the cytoplasm. It is found in the cytoskeleton. The protein localises to the microtubule organizing center. It localises to the centrosome. The protein resides in the cell projection. Its subcellular location is the cilium. It is found in the cilium basal body. In terms of biological role, required during ciliogenesis for tubulin glutamylation in cilium. Probably acts by participating in the transport of tubulin polyglutamylases between the basal body and the cilium. The protein is Centrosomal protein of 41 kDa B (cep41-b) of Xenopus laevis (African clawed frog).